A 215-amino-acid polypeptide reads, in one-letter code: Probable glutathione S-transferase GSTF2 (215 aa).

The 82-residue stretch at Ala2 to Leu83 folds into the GST N-terminal domain. Residues Ser12, His41–Lys42, Gln54–Val55, and Glu67–Ser68 each bind glutathione. Positions Asp88 to Ala215 constitute a GST C-terminal domain.

Belongs to the GST superfamily. Phi family. Constitutively expressed in roots. Expressed in anthers, callus, panicles, sheaths and stems (at protein level).

The enzyme catalyses RX + glutathione = an S-substituted glutathione + a halide anion + H(+). Functionally, conjugation of reduced glutathione to a wide number of exogenous and endogenous hydrophobic electrophiles. This is Probable glutathione S-transferase GSTF2 (GSTF2) from Oryza sativa subsp. japonica (Rice).